The chain runs to 437 residues: UDP-N-acetylmuramoylalanine--D-glutamate ligase (437 aa).

115-121 (GSNGKST) provides a ligand contact to ATP.

Belongs to the MurCDEF family.

The protein localises to the cytoplasm. It catalyses the reaction UDP-N-acetyl-alpha-D-muramoyl-L-alanine + D-glutamate + ATP = UDP-N-acetyl-alpha-D-muramoyl-L-alanyl-D-glutamate + ADP + phosphate + H(+). It participates in cell wall biogenesis; peptidoglycan biosynthesis. Functionally, cell wall formation. Catalyzes the addition of glutamate to the nucleotide precursor UDP-N-acetylmuramoyl-L-alanine (UMA). The chain is UDP-N-acetylmuramoylalanine--D-glutamate ligase from Vibrio parahaemolyticus serotype O3:K6 (strain RIMD 2210633).